The chain runs to 184 residues: Spiro-conjugate synthase (184 aa).

A disulfide bond links C57 and C184. Q115 is a binding site for (1S,3R,6R,8R,9R,11R,14S,15S,19R,20R)-8-ethyl-9,15-dihydroxy-3,4,6,20-tetramethyl-21,23-dioxo-24-azapentacyclo[20.2.1.0(1,6).0(11,20).0(14,19)]pentacosa-4,12,22(25)-trien-25-olate.

Homodimer.

The catalysed reaction is 4-[(1R,2R,4aS,5S,8aR)-2-[(2R,3R,5E,7E)-3-ethyl-2-hydroxy-5,7-dimethylnona-5,7-dien-1-yl]-5-hydroxy-1-methyl-1,2,4a,5,6,7,8,8a-octahydronaphthalene-1-carbonyl]-2-methylidene-5-oxo-2,5-dihydro-1H-pyrrol-3-olate = (1S,3R,6R,8R,9R,11R,14S,15S,19R,20R)-8-ethyl-9,15-dihydroxy-3,4,6,20-tetramethyl-21,23-dioxo-24-azapentacyclo[20.2.1.0(1,6).0(11,20).0(14,19)]pentacosa-4,12,22(25)-trien-25-olate. Its pathway is antibiotic biosynthesis. Involved in the biosynthesis of the spirotetramate antibiotics pyrroindomycins. Catalyzes the intramolecular cyclization forming the spiro-conjugate moiety in pyrroindomycins, via an exo-selective [4+2] cycloaddition reaction. This is Spiro-conjugate synthase from Streptomyces rugosporus.